The sequence spans 144 residues: Large ribosomal subunit protein uL13 (144 aa).

This sequence belongs to the universal ribosomal protein uL13 family. In terms of assembly, part of the 50S ribosomal subunit.

This protein is one of the early assembly proteins of the 50S ribosomal subunit, although it is not seen to bind rRNA by itself. It is important during the early stages of 50S assembly. This Nitratidesulfovibrio vulgaris (strain ATCC 29579 / DSM 644 / CCUG 34227 / NCIMB 8303 / VKM B-1760 / Hildenborough) (Desulfovibrio vulgaris) protein is Large ribosomal subunit protein uL13.